The chain runs to 468 residues: Bone morphogenetic protein 3 (468 aa).

A signal peptide spans 1 to 22; it reads MAGARGLLCLWLGYFCLNLAQG. Residues 23-358 constitute a propeptide that is removed on maturation; the sequence is QRPNLHLPGL…EQTLKKARRK (336 aa). Residues 29-53 are disordered; that stretch reads LPGLRETEPSDRATGGSPSPDLRPH. Residues Asn-115, Asn-139, Asn-171, and Asn-216 are each glycosylated (N-linked (GlcNAc...) asparagine). Residues 314-349 are disordered; it reads RKPYKSLQTQPPEKSRNKKKQRKGSHQKGQTLQFDE. Basic residues predominate over residues 329–339; the sequence is RNKKKQRKGSH. Polar residues predominate over residues 340–349; that stretch reads QKGQTLQFDE. 3 disulfide bridges follow: Cys-366-Cys-433, Cys-395-Cys-465, and Cys-399-Cys-467. N-linked (GlcNAc...) asparagine glycosylation occurs at Asn-459.

It belongs to the TGF-beta family. As to quaternary structure, homodimer; disulfide-linked.

Its subcellular location is the secreted. In terms of biological role, negatively regulates bone density. Antagonizes the ability of certain osteogenic BMPs to induce osteoprogenitor differentiation and ossification. This Mus musculus (Mouse) protein is Bone morphogenetic protein 3 (Bmp3).